Here is an 85-residue protein sequence, read N- to C-terminus: SPbeta prophage-derived uncharacterized protein YoqG (85 aa).

This Bacillus subtilis (strain 168) protein is SPbeta prophage-derived uncharacterized protein YoqG (yoqG).